Here is a 995-residue protein sequence, read N- to C-terminus: S1 RNA-binding domain-containing protein 1 (995 aa).

Residues 23-81 form a disordered region; it reads SFSELSSASEEDDKEDSAWEPQKKVPRSRKQPPPKESKPKRMPRVKKNAPQISDGSEVV. Glycyl lysine isopeptide (Lys-Gly) (interchain with G-Cter in SUMO2) cross-links involve residues K84 and K134. The interval 120–165 is disordered; the sequence is CAAQPHTVRRTKKLKVEEETSKASNLEGESNSSETPSTSTVWGGTC. The span at 146–159 shows a compositional bias: low complexity; the sequence is EGESNSSETPSTST. Residues K166, K167, and K183 each participate in a glycyl lysine isopeptide (Lys-Gly) (interchain with G-Cter in SUMO2) cross-link. K185 participates in a covalent cross-link: Glycyl lysine isopeptide (Lys-Gly) (interchain with G-Cter in SUMO1); alternate. Residue K185 forms a Glycyl lysine isopeptide (Lys-Gly) (interchain with G-Cter in SUMO2); alternate linkage. Residues 258–288 are a coiled coil; sequence ADSLREVQQTLEELRAVAKKVHSTIQKIKKE. A Phosphoserine modification is found at S861. The region spanning 919-992 is the S1 motif domain; sequence GTVLTGKVEN…PRSRITLDLI (74 aa). A Glycyl lysine isopeptide (Lys-Gly) (interchain with G-Cter in SUMO2) cross-link involves residue K955. S964 is modified (phosphoserine).

This chain is S1 RNA-binding domain-containing protein 1 (SRBD1), found in Homo sapiens (Human).